Reading from the N-terminus, the 103-residue chain is Small ribosomal subunit protein uS10 (103 aa).

It belongs to the universal ribosomal protein uS10 family. Part of the 30S ribosomal subunit.

Its function is as follows. Involved in the binding of tRNA to the ribosomes. The sequence is that of Small ribosomal subunit protein uS10 from Desulfatibacillum aliphaticivorans.